Here is a 228-residue protein sequence, read N- to C-terminus: Cytidylate kinase (228 aa).

An ATP-binding site is contributed by 17–25 (GPTASGKGT).

It belongs to the cytidylate kinase family. Type 1 subfamily.

It is found in the cytoplasm. It carries out the reaction CMP + ATP = CDP + ADP. The enzyme catalyses dCMP + ATP = dCDP + ADP. This Burkholderia pseudomallei (strain 1106a) protein is Cytidylate kinase.